The primary structure comprises 81 residues: Putative defensin-like protein 265 (81 aa).

Positions 1–26 (MEKTVSRKVVVLAILLSLSCLCIAKA) are cleaved as a signal peptide. 3 disulfide bridges follow: cysteine 48–cysteine 66, cysteine 54–cysteine 71, and cysteine 58–cysteine 73.

The protein belongs to the DEFL family.

The protein localises to the secreted. The chain is Putative defensin-like protein 265 from Arabidopsis thaliana (Mouse-ear cress).